A 147-amino-acid polypeptide reads, in one-letter code: 3-dehydroquinate dehydratase (147 aa).

The active-site Proton acceptor is Tyr-23. 3 residues coordinate substrate: Asn-74, His-80, and Asp-87. His-100 functions as the Proton donor in the catalytic mechanism. Substrate-binding positions include 101–102 (LS) and Arg-111.

This sequence belongs to the type-II 3-dehydroquinase family. As to quaternary structure, homododecamer.

It carries out the reaction 3-dehydroquinate = 3-dehydroshikimate + H2O. It participates in metabolic intermediate biosynthesis; chorismate biosynthesis; chorismate from D-erythrose 4-phosphate and phosphoenolpyruvate: step 3/7. Catalyzes a trans-dehydration via an enolate intermediate. This is 3-dehydroquinate dehydratase from Clostridium botulinum (strain 657 / Type Ba4).